Reading from the N-terminus, the 119-residue chain is Holo-[acyl-carrier-protein] synthase (119 aa).

Positions 5 and 51 each coordinate Mg(2+).

This sequence belongs to the P-Pant transferase superfamily. AcpS family. Mg(2+) serves as cofactor.

The protein resides in the cytoplasm. It catalyses the reaction apo-[ACP] + CoA = holo-[ACP] + adenosine 3',5'-bisphosphate + H(+). Its function is as follows. Transfers the 4'-phosphopantetheine moiety from coenzyme A to a Ser of acyl-carrier-protein. The polypeptide is Holo-[acyl-carrier-protein] synthase (Helicobacter pylori (strain J99 / ATCC 700824) (Campylobacter pylori J99)).